We begin with the raw amino-acid sequence, 95 residues long: Co-chaperonin GroES (95 aa).

It belongs to the GroES chaperonin family. As to quaternary structure, heptamer of 7 subunits arranged in a ring. Interacts with the chaperonin GroEL.

The protein resides in the cytoplasm. Its function is as follows. Together with the chaperonin GroEL, plays an essential role in assisting protein folding. The GroEL-GroES system forms a nano-cage that allows encapsulation of the non-native substrate proteins and provides a physical environment optimized to promote and accelerate protein folding. GroES binds to the apical surface of the GroEL ring, thereby capping the opening of the GroEL channel. The chain is Co-chaperonin GroES from Glaesserella parasuis serovar 5 (strain SH0165) (Haemophilus parasuis).